A 371-amino-acid chain; its full sequence is N-acetyldiaminopimelate deacetylase (371 aa).

The active site involves D68. The active-site Proton acceptor is E127.

It belongs to the peptidase M20A family. N-acetyldiaminopimelate deacetylase subfamily.

It catalyses the reaction N-acetyl-(2S,6S)-2,6-diaminopimelate + H2O = (2S,6S)-2,6-diaminopimelate + acetate. Its pathway is amino-acid biosynthesis; L-lysine biosynthesis via DAP pathway; LL-2,6-diaminopimelate from (S)-tetrahydrodipicolinate (acetylase route): step 3/3. Functionally, catalyzes the conversion of N-acetyl-diaminopimelate to diaminopimelate and acetate. This chain is N-acetyldiaminopimelate deacetylase, found in Listeria monocytogenes serotype 4b (strain CLIP80459).